Consider the following 329-residue polypeptide: MHPQQLVIAWLSLVLLAPPLMAIWELEKNVYVVELDWHPDAPGEMVVLTCNTPEEDDITWTSDQSSEVLGSGKTLTIQVKEFADAGQYTCHKGGEVLSHSFLLIHKKEDGIWSTDILREQKESKNKIFLKCEAKNYSGRFTCWWLTAISTDLKFTVKSSRGSSDPQEVTCGAATLSAEKVRVDNRDYKKYTVECQEGSACPAAEESLPIEVVVDAIHKLKYENYTSSFFIRDIIKPDPPKNLQLKPLKNSRHVEVSWEYPDTWSTPHSYFSLTFGVQVQGKNNREKKDRLSVDKTSAKVVCHKDAKIRVQARDRYYSSSWSNWASVSCS.

A signal peptide spans methionine 1–alanine 22. The Ig-like C2-type domain occupies isoleucine 23 to lysine 106. A disulfide bridge connects residues cysteine 50 and cysteine 90. 2 N-linked (GlcNAc...) asparagine glycosylation sites follow: asparagine 135 and asparagine 223. In terms of domain architecture, Fibronectin type-III spans proline 238 to serine 329.

It belongs to the IL-12B family. In terms of assembly, heterodimer with IL12A; disulfide-linked. The heterodimer is known as interleukin IL-12. Heterodimer with IL23A; disulfide-linked. The heterodimer is known as interleukin IL-23. Also secreted as a monomer. Interacts with NBR1; this interaction promotes IL-12 secretion.

Its subcellular location is the secreted. In terms of biological role, cytokine that can act as a growth factor for activated T and NK cells, enhance the lytic activity of NK/lymphokine-activated killer cells, and stimulate the production of IFN-gamma by resting PBMC. Its function is as follows. Associates with IL23A to form the IL-23 interleukin, a heterodimeric cytokine which functions in innate and adaptive immunity. IL-23 may constitute with IL-17 an acute response to infection in peripheral tissues. IL-23 binds to a heterodimeric receptor complex composed of IL12RB1 and IL23R, activates the Jak-Stat signaling cascade, stimulates memory rather than naive T-cells and promotes production of pro-inflammatory cytokines. IL-23 induces autoimmune inflammation and thus may be responsible for autoimmune inflammatory diseases and may be important for tumorigenesis. This chain is Interleukin-12 subunit beta (IL12B), found in Felis catus (Cat).